The primary structure comprises 379 residues: UDP-N-acetylglucosamine--N-acetylmuramyl-(pentapeptide) pyrophosphoryl-undecaprenol N-acetylglucosamine transferase (379 aa).

UDP-N-acetyl-alpha-D-glucosamine contacts are provided by residues 10–12 (TAG), Asn-124, Arg-161, Ser-195, and Gln-291.

It belongs to the glycosyltransferase 28 family. MurG subfamily.

The protein localises to the cell membrane. The catalysed reaction is di-trans,octa-cis-undecaprenyl diphospho-N-acetyl-alpha-D-muramoyl-L-alanyl-D-glutamyl-meso-2,6-diaminopimeloyl-D-alanyl-D-alanine + UDP-N-acetyl-alpha-D-glucosamine = di-trans,octa-cis-undecaprenyl diphospho-[N-acetyl-alpha-D-glucosaminyl-(1-&gt;4)]-N-acetyl-alpha-D-muramoyl-L-alanyl-D-glutamyl-meso-2,6-diaminopimeloyl-D-alanyl-D-alanine + UDP + H(+). It functions in the pathway cell wall biogenesis; peptidoglycan biosynthesis. In terms of biological role, cell wall formation. Catalyzes the transfer of a GlcNAc subunit on undecaprenyl-pyrophosphoryl-MurNAc-pentapeptide (lipid intermediate I) to form undecaprenyl-pyrophosphoryl-MurNAc-(pentapeptide)GlcNAc (lipid intermediate II). The protein is UDP-N-acetylglucosamine--N-acetylmuramyl-(pentapeptide) pyrophosphoryl-undecaprenol N-acetylglucosamine transferase of Thermobifida fusca (strain YX).